The chain runs to 401 residues: Argininosuccinate synthase (401 aa).

ATP-binding positions include 7–15 and Ala34; that span reads AYSGGLDTS. 2 residues coordinate L-citrulline: Tyr85 and Ser90. Gly115 is a binding site for ATP. L-aspartate-binding residues include Thr117, Asn121, and Asp122. Residue Asn121 coordinates L-citrulline. The L-citrulline site is built by Arg125, Ser174, Ser183, Glu259, and Tyr271.

Belongs to the argininosuccinate synthase family. Type 1 subfamily. In terms of assembly, homotetramer.

The protein localises to the cytoplasm. The enzyme catalyses L-citrulline + L-aspartate + ATP = 2-(N(omega)-L-arginino)succinate + AMP + diphosphate + H(+). Its pathway is amino-acid biosynthesis; L-arginine biosynthesis; L-arginine from L-ornithine and carbamoyl phosphate: step 2/3. The sequence is that of Argininosuccinate synthase from Desulfitobacterium hafniense (strain DSM 10664 / DCB-2).